Consider the following 218-residue polypeptide: Flagellin B1 (218 aa).

The propeptide occupies 1–12 (MNIKEFLSNKKG). N-linked (GlcNAc...) asparagine glycosylation is found at asparagine 38, asparagine 71, asparagine 77, asparagine 115, and asparagine 136.

Belongs to the archaeal flagellin family. N-linked glycans consist of the 779 Da trisaccharide beta-ManNAc(Thr)-(1-4)-beta-GlcNAc3NAcA-(1-3)-beta-GlcNAc.

Its subcellular location is the archaeal flagellum. Flagellin is the subunit protein which polymerizes to form the filaments of archaeal flagella. The protein is Flagellin B1 (flaB1) of Methanococcus voltae.